The chain runs to 126 residues: Probable DNA-directed RNA polymerase II subunit RPB11 (126 aa).

The protein belongs to the archaeal Rpo11/eukaryotic RPB11/RPC19 RNA polymerase subunit family. Component of the RNA polymerase II (Pol II) complex consisting of 12 subunits.

It localises to the nucleus. Functionally, DNA-dependent RNA polymerase catalyzes the transcription of DNA into RNA using the four ribonucleoside triphosphates as substrates. Component of RNA polymerase II which synthesizes mRNA precursors and many functional non-coding RNAs. Pol II is the central component of the basal RNA polymerase II transcription machinery. It is composed of mobile elements that move relative to each other. RPB11 is part of the core element with the central large cleft. The protein is Probable DNA-directed RNA polymerase II subunit RPB11 of Plasmodium chabaudi chabaudi.